Reading from the N-terminus, the 66-residue chain is Large ribosomal subunit protein uL29 (66 aa).

The protein belongs to the universal ribosomal protein uL29 family.

This chain is Large ribosomal subunit protein uL29, found in Petrotoga mobilis (strain DSM 10674 / SJ95).